The sequence spans 810 residues: Nuclear pore complex protein NUP88 (810 aa).

A disordered region spans residues 1–23 (MKFNFNETEDAPDSRRSPTPKEP). A coiled-coil region spans residues 646-748 (APNLKRIIDD…RARVKKSTQK (103 aa)).

In terms of assembly, part of the nuclear pore complex (NPC). The NPC has an eight-fold symmetrical structure comprising a central transport channel and two rings, the cytoplasmic and nuclear rings, to which eight filaments are attached. The cytoplasmic filaments have loose ends, while the nuclear filaments are joined in a distal ring, forming a nuclear basket. NPCs are highly dynamic in configuration and composition, and can be devided in 3 subcomplexes, the NUP62 subcomplex, the NUP107-160 subcomplex and the NUP93 subcomplex, containing approximately 30 different nucleoporin proteins.

The protein localises to the nucleus envelope. The protein resides in the nucleus. It is found in the nuclear pore complex. Its function is as follows. Involved in the regulation of exportin-mediated nuclear protein export. Required for resistance mediated by multiple R proteins and for the appropriate nuclear accumulation of SNC1 and of the downstream defense signaling components EDS1 and NPR1. Not involved in salt tolerance, ethylene and auxin responses, but required for systemic acquired resistance. The protein is Nuclear pore complex protein NUP88 of Arabidopsis thaliana (Mouse-ear cress).